We begin with the raw amino-acid sequence, 273 residues long: Cell wall mannoprotein 1 (273 aa).

The first 17 residues, methionine 1–alanine 17, serve as a signal peptide directing secretion. A disordered region spans residues aspartate 173 to leucine 247. Over residues serine 177–leucine 247 the composition is skewed to low complexity.

The protein belongs to the cell wall mannoprotein 1 family. Galactomannoprotein, glycosylated.

It is found in the secreted. It localises to the cell wall. Functionally, constitutive protein of the cell wall. Antigen target of host humoral immune response. This chain is Cell wall mannoprotein 1, found in Aspergillus flavus.